The following is a 518-amino-acid chain: Ethanolamine kinase (518 aa).

A compositionally biased stretch (polar residues) spans 1-19; the sequence is MGTETKSNSYTGQISTSGG. A disordered region spans residues 1–88; sequence MGTETKSNSY…DIRAKPEDKS (88 aa). Positions 33–68 are enriched in low complexity; the sequence is QTVNQQTLSLSQSNQVQNQLNSHSNSNSYPNPSGSE. The span at 69–88 shows a compositional bias: basic and acidic residues; the sequence is NKNENEQNSRDIRAKPEDKS. 2 positions are modified to phosphoserine: S190 and S194.

This sequence belongs to the choline/ethanolamine kinase family.

The protein resides in the cytoplasm. It carries out the reaction ethanolamine + ATP = phosphoethanolamine + ADP + H(+). It participates in phospholipid metabolism; phosphatidylethanolamine biosynthesis; phosphatidylethanolamine from ethanolamine: step 1/3. In terms of biological role, highly specific for ethanolamine phosphorylation. May be a rate-controlling step in phosphatidylethanolamine biosynthesis. In Drosophila melanogaster (Fruit fly), this protein is Ethanolamine kinase (eas).